The following is a 214-amino-acid chain: Adenylate kinase (214 aa).

Position 10-15 (10-15 (GAGKGT)) interacts with ATP. The tract at residues 30 to 59 (STGDMLRAAVKAQTPVGLKAKAVMDRGELV) is NMP. AMP is bound by residues Thr31, Arg36, 57–59 (ELV), 85–88 (GYPR), and Gln92. Positions 126–163 (GRFTCAKCGTGYHDRHKQPAREGVCDVCGSTEFKRRPD) are LID. Residue Arg127 coordinates ATP. The Zn(2+) site is built by Cys130, Cys133, Cys150, and Cys153. AMP contacts are provided by Arg160 and Arg172. Gly200 provides a ligand contact to ATP.

It belongs to the adenylate kinase family. In terms of assembly, monomer.

Its subcellular location is the cytoplasm. The enzyme catalyses AMP + ATP = 2 ADP. The protein operates within purine metabolism; AMP biosynthesis via salvage pathway; AMP from ADP: step 1/1. Its function is as follows. Catalyzes the reversible transfer of the terminal phosphate group between ATP and AMP. Plays an important role in cellular energy homeostasis and in adenine nucleotide metabolism. The chain is Adenylate kinase from Erythrobacter litoralis (strain HTCC2594).